The primary structure comprises 370 residues: Luciferin sulfotransferase (370 aa).

90–95 (KAGTTW) is a 3'-phosphoadenylyl sulfate binding site. The active-site Proton acceptor is the histidine 165. Residues arginine 189, serine 197, tyrosine 250, 284–289 (LSFESM), and 316–320 (FMRSG) contribute to the 3'-phosphoadenylyl sulfate site.

This sequence belongs to the sulfotransferase 1 family.

The enzyme catalyses firefly D-luciferin + 3'-phosphoadenylyl sulfate = firefly D-sulfoluciferin + adenosine 3',5'-bisphosphate + H(+). The catalysed reaction is firefly L-luciferin + 3'-phosphoadenylyl sulfate = firefly L-sulfoluciferin + adenosine 3',5'-bisphosphate + H(+). Its activity is regulated as follows. Sulfoluciferin formation is inhibited by the product adenosine 3',5'-bisphosphate. Functionally, catalyzes the production of firefly sulfoluciferin from luciferin using the sulfo-donor 3'-phosphoadenylyl sulfate (PAPS). Is also able to catalyze the reverse reaction, i.e. the adenosine 3',5'-bisphosphate-dependent desulfonation of sulfoluciferin. Can use either D- or L-luciferin stereoisomer as substrate. Sulfoluciferin, which is not a substrate of P.pyralis luciferase, likely serves as a luciferin storage form in fireflies. The protein is Luciferin sulfotransferase of Photinus pyralis (Common eastern firefly).